Reading from the N-terminus, the 78-residue chain is UPF0349 protein Sca_0544 (78 aa).

It belongs to the UPF0349 family.

The protein is UPF0349 protein Sca_0544 of Staphylococcus carnosus (strain TM300).